Here is a 209-residue protein sequence, read N- to C-terminus: MKGKSSVMEKLAEVVSLKLNKHLKMEGIELIKLKLGVEIIFINISKLAILFLVSYYFGLIKETIIMLAAFGFLRSNAFGLHAKNSIVCTVMSLLMFVLGAYLSKYLLFNNYMVLASFIIVNLLLFRYAPGDTEAHPLVGAKLRDKLKKQAVLMGMLLMAITLIIPDELIKTCISLSSYFEIISILPITYKVLGRRYKNYYEFERTIKQS.

5 consecutive transmembrane segments (helical) span residues 49–71 (ILFLVSYYFGLIKETIIMLAAFG), 82–102 (AKNSIVCTVMSLLMFVLGAYL), 105–125 (YLLFNNYMVLASFIIVNLLLF), 149–169 (QAVLMGMLLMAITLIIPDELI), and 173–193 (ISLSSYFEIISILPITYKVLG).

This sequence belongs to the AgrB family.

It localises to the cell membrane. May be involved in the proteolytic processing of a quorum sensing system signal molecule precursor. This Clostridium acetobutylicum (strain ATCC 824 / DSM 792 / JCM 1419 / IAM 19013 / LMG 5710 / NBRC 13948 / NRRL B-527 / VKM B-1787 / 2291 / W) protein is Putative AgrB-like protein.